A 175-amino-acid polypeptide reads, in one-letter code: Co-chaperone protein HscB homolog (175 aa).

Residues 7 to 79 form the J domain; sequence SHFELFHLPA…LKRATYLLHL (73 aa).

It belongs to the HscB family. As to quaternary structure, interacts with HscA and stimulates its ATPase activity.

Co-chaperone involved in the maturation of iron-sulfur cluster-containing proteins. Seems to help targeting proteins to be folded toward HscA. This is Co-chaperone protein HscB homolog from Burkholderia thailandensis (strain ATCC 700388 / DSM 13276 / CCUG 48851 / CIP 106301 / E264).